A 688-amino-acid polypeptide reads, in one-letter code: Sodium channel and clathrin linker 1 (688 aa).

A2 carries the post-translational modification N-acetylalanine. Coiled coils occupy residues 59 to 108 and 152 to 673; these read LIAE…AVEK and QTAS…SVIT. S681 bears the Phosphoserine mark.

Interacts with SCN10A and clathrin. Identified in a complex containing SCN10A, clathrin and SCLT1.

The protein localises to the cytoplasm. It is found in the cytoskeleton. The protein resides in the microtubule organizing center. It localises to the centrosome. Its subcellular location is the centriole. Functionally, adapter protein that links SCN10A to clathrin. Regulates SCN10A channel activity, possibly by promoting channel internalization. This Mus musculus (Mouse) protein is Sodium channel and clathrin linker 1 (Sclt1).